The following is a 187-amino-acid chain: Elongation factor P (187 aa).

This sequence belongs to the elongation factor P family.

The protein localises to the cytoplasm. It participates in protein biosynthesis; polypeptide chain elongation. Involved in peptide bond synthesis. Stimulates efficient translation and peptide-bond synthesis on native or reconstituted 70S ribosomes in vitro. Probably functions indirectly by altering the affinity of the ribosome for aminoacyl-tRNA, thus increasing their reactivity as acceptors for peptidyl transferase. This chain is Elongation factor P, found in Mycoplasmopsis agalactiae (strain NCTC 10123 / CIP 59.7 / PG2) (Mycoplasma agalactiae).